Reading from the N-terminus, the 191-residue chain is UPF0149 protein VS_2635 (191 aa).

This sequence belongs to the UPF0149 family.

This Vibrio atlanticus (strain LGP32) (Vibrio splendidus (strain Mel32)) protein is UPF0149 protein VS_2635.